The sequence spans 384 residues: Cyclin-J (384 aa).

One can recognise a Cyclin N-terminal domain in the interval Asp15–Cys143.

This sequence belongs to the cyclin family. Cyclin J subfamily.

In Xenopus laevis (African clawed frog), this protein is Cyclin-J (ccnj).